Reading from the N-terminus, the 739-residue chain is MISAVFGKRRSLSRTLTAGTICAALISGYATMASADDGQGATGEAIIHADDHPGNWMTYGRTYSEQRYSPLDQINRSNVGNLKLAWYLDLDTNRGQEGTPLVIDGVMYATTNWSMMKAVDAATGKLLWSYDPRVPGNIADKGCCDTVNRGAAYWNGKVYFGTFDGRLIALDAKTGKLVWSVNTIPPEAELGKQRSYTVDGAPRIAKGRVIIGNGGSEFGARGFVTAFDAETGKVDWRFFTAPNPKNEPDHTASDSVLMNKAYQTWSPTGAWTRQGGGGTVWDSIVYDPVADLVYLGVGNGSPWNYKYRSEGKGDNLFLGSIVALKPETGEYVWHFQETPMDQWDFTSVQQIMTLDLPINGETRHVIVHAPKNGFFYIIDAKTGEFISGKNYVYVNWASGLDPKTGRPIYNPDALYTLTGKEWYGIPGDLGGHNFAAMAFSPKTGLVYIPAQQVPFLYTNQVGGFTPHPDSWNLGLDMNKVGIPDSPEAKQAFVKDLKGWIVAWDPQKQAEAWRVDHKGPWNGGILATGGDLLFQGLANGEFHAYDATNGSDLFHFAADSGIIAPPVTYLANGKQYVAVEVGWGGIYPFFLGGLARTSGWTVNHSRIIAFSLDGKSGPLPKQNDQGFLPVKPPAQFDSKRTDNGYFQFQTYCAACHGDNAEGAGVLPDLRWSGSIRHEDAFYNVVGRGALTAYGMDRFDGNMNPTEIEDIRQFLIKRANETYQREVDARKNADGIPEQLP.

Positions 1-35 (MISAVFGKRRSLSRTLTAGTICAALISGYATMASA) are cleaved as a signal peptide. Residue glutamate 97 participates in pyrroloquinoline quinone binding. Cysteine 143 and cysteine 144 form a disulfide bridge. Arginine 149 provides a ligand contact to pyrroloquinoline quinone. Glutamate 217 contacts Ca(2+). Threonine 279 contacts pyrroloquinoline quinone. Positions 299 and 344 each coordinate Ca(2+). The active-site Proton acceptor is aspartate 344. The pyrroloquinoline quinone site is built by lysine 371 and isoleucine 585. Residues 635-739 (FDSKRTDNGY…NADGIPEQLP (105 aa)) form the Cytochrome c domain. Residues cysteine 651, cysteine 654, histidine 655, and methionine 694 each contribute to the heme c site.

The protein belongs to the bacterial PQQ dehydrogenase family. In terms of assembly, the alcohol dehydrogenase multicomponent enzyme system is composed of a dehydrogenase subunit I (AdhA) and a cytochrome c subunit II (AdhB). Pyrroloquinoline quinone serves as cofactor. The cofactor is Ca(2+). It depends on heme c as a cofactor.

It localises to the cell membrane. The enzyme catalyses ethanol + a ubiquinone = a ubiquinol + acetaldehyde. Its function is as follows. Dehydrogenase component of the alcohol dehydrogenase multicomponent enzyme system which is involved in the production of acetic acid and in the ethanol oxidase respiratory chain. Quinohemoprotein alcohol dehydrogenase (ADH) catalyzes the oxidation of ethanol to acetaldehyde by transferring electrons to the ubiquinone embedded in the membrane phospholipids. The electrons transfer from ethanol to membranous ubiquinone occurs from pyrroloquinoline quinone (PQQ) to one heme c in subunit I (AdhA), and finally to two heme c in subunit II (AdhB). Besides ubiquinone reduction, ADH also has a ubiquinol (QH2) oxidation reaction which mediates electron transfer from ubiquinol to the non-energy generating bypass oxidase system. The electrons transfer occurs from ubiquinol (QH2) to the additional heme c within subunit II (AdhB). In Komagataeibacter europaeus (Gluconacetobacter europaeus), this protein is Alcohol dehydrogenase (quinone), dehydrogenase subunit.